A 193-amino-acid polypeptide reads, in one-letter code: Deoxycytidylate deaminase (193 aa).

The 171-residue stretch at 1-171 folds into the CMP/dCMP-type deaminase domain; it reads MKASTVLQIA…DILRNAGIEV (171 aa). 5 residues coordinate Zn(2+): C19, C49, H94, E102, and H104. Catalysis depends on E106, which acts as the Proton donor. Zn(2+)-binding residues include C132 and C135. Y153 contributes to the substrate binding site.

This sequence belongs to the cytidine and deoxycytidylate deaminase family. In terms of assembly, homohexamer. It depends on Zn(2+) as a cofactor.

It carries out the reaction dCMP + H2O + H(+) = dUMP + NH4(+). With respect to regulation, allosteric enzyme whose activity is greatly influenced by the end products of its metabolic pathway, dCTP and dTTP. Supplies the nucleotide substrate for thymidylate synthetase. The polypeptide is Deoxycytidylate deaminase (CD) (Escherichia coli (Bacteriophage T4)).